A 590-amino-acid polypeptide reads, in one-letter code: Cytidine monophosphate-N-acetylneuraminic acid hydroxylase (590 aa).

Positions Leu14 to Leu112 constitute a Rieske domain. Residues Cys54, His56, Cys75, and His78 each contribute to the [2Fe-2S] cluster site.

Belongs to the CMP-Neu5Ac hydroxylase family. [2Fe-2S] cluster serves as cofactor.

It localises to the cytoplasm. The enzyme catalyses CMP-N-acetyl-beta-neuraminate + 2 Fe(II)-[cytochrome b5] + O2 + 2 H(+) = CMP-N-glycoloyl-beta-neuraminate + 2 Fe(III)-[cytochrome b5] + H2O. Its pathway is amino-sugar metabolism; N-acetylneuraminate metabolism. Its function is as follows. Sialic acids are components of carbohydrate chains of glycoconjugates and are involved in cell-cell recognition and cell-pathogen interactions. Catalyzes the conversion of CMP-N-acetylneuraminic acid (CMP-Neu5Ac) into its hydroxylated derivative CMP-N-glycolylneuraminic acid (CMP-Neu5Gc), a sialic acid abundantly expressed at the surface of many cells. The polypeptide is Cytidine monophosphate-N-acetylneuraminic acid hydroxylase (Pan troglodytes (Chimpanzee)).